A 349-amino-acid polypeptide reads, in one-letter code: Farnesyl pyrophosphate synthase vrtD (349 aa).

Isopentenyl diphosphate is bound by residues lysine 53, arginine 56, and glutamine 92. Positions 99 and 103 each coordinate Mg(2+). Arginine 108 contributes to the dimethylallyl diphosphate binding site. An isopentenyl diphosphate-binding site is contributed by arginine 109. 5 residues coordinate dimethylallyl diphosphate: lysine 196, threonine 197, glutamine 236, lysine 253, and lysine 262.

This sequence belongs to the FPP/GGPP synthase family. Requires Mg(2+) as cofactor.

The enzyme catalyses isopentenyl diphosphate + dimethylallyl diphosphate = (2E)-geranyl diphosphate + diphosphate. The catalysed reaction is isopentenyl diphosphate + (2E)-geranyl diphosphate = (2E,6E)-farnesyl diphosphate + diphosphate. It functions in the pathway secondary metabolite biosynthesis; terpenoid biosynthesis. In terms of biological role, farnesyl pyrophosphate synthase; part of the gene cluster that mediates the biosynthesis of viridicatumtoxin, a tetracycline-like fungal meroterpenoid with a unique, fused spirobicyclic ring system. The first step of the pathway is the production of the malonamoyl-CoA starter unit for the polyketide synthase vrtA. The aldolase vrtJ may be involved in the synthesis of the malonamate substrate for malonamoyl-CoA synthetase vrtB. The polyketide synthase vrtA then may utilize the malonamoyl-CoA starter unit, followed by sequential condensation of eight malonyl-CoA units to form the polyketide backbone. The cyclization of the last ring could be mediated by the lactamase-like protein vrtG. The proposed post-PKS tailoring steps are a hydroxylation at C5 catalyzed the cytochrome P450 monooxygenase vrtE, a hydroxylation at C12a catalyzed by VrtH and/or VrtI, and an O-methylation by the O-methyltransferase vrtF. VrtC is then proposed to catalyze the transfer of a geranyl group synthesized by vrtD to the aromatic C ring of the tetracyclic polyketide intermediate of viridicatumtoxin to yield previridicatumtoxin. Finally, the cytochrome P450 monooxygenase vrtK catalyzes the spirocyclization of the geranyl moiety of previridicatumtoxin to afford viridicatumtoxin. This is Farnesyl pyrophosphate synthase vrtD from Penicillium aethiopicum.